Here is an 840-residue protein sequence, read N- to C-terminus: DNA gyrase subunit A (840 aa).

Positions 51 to 516 (LPDVRDGFKP…VSSHIDDEDL (466 aa)) constitute a Topo IIA-type catalytic domain. Catalysis depends on Tyr139, which acts as the O-(5'-phospho-DNA)-tyrosine intermediate. The short motif at 543 to 549 (QRRGGVG) is the GyrA-box element.

Belongs to the type II topoisomerase GyrA/ParC subunit family. In terms of assembly, heterotetramer, composed of two GyrA and two GyrB chains. In the heterotetramer, GyrA contains the active site tyrosine that forms a transient covalent intermediate with DNA, while GyrB binds cofactors and catalyzes ATP hydrolysis.

The protein resides in the cytoplasm. It carries out the reaction ATP-dependent breakage, passage and rejoining of double-stranded DNA.. In terms of biological role, a type II topoisomerase that negatively supercoils closed circular double-stranded (ds) DNA in an ATP-dependent manner to modulate DNA topology and maintain chromosomes in an underwound state. Negative supercoiling favors strand separation, and DNA replication, transcription, recombination and repair, all of which involve strand separation. Also able to catalyze the interconversion of other topological isomers of dsDNA rings, including catenanes and knotted rings. Type II topoisomerases break and join 2 DNA strands simultaneously in an ATP-dependent manner. In Ureaplasma parvum serovar 3 (strain ATCC 700970), this protein is DNA gyrase subunit A.